We begin with the raw amino-acid sequence, 151 residues long: Ribosome maturation factor RimP (151 aa).

Belongs to the RimP family.

The protein localises to the cytoplasm. Functionally, required for maturation of 30S ribosomal subunits. This Shewanella frigidimarina (strain NCIMB 400) protein is Ribosome maturation factor RimP.